Here is a 430-residue protein sequence, read N- to C-terminus: Enolase (430 aa).

Gln-165 is a (2R)-2-phosphoglycerate binding site. Catalysis depends on Glu-207, which acts as the Proton donor. Mg(2+) contacts are provided by Asp-244, Glu-287, and Asp-314. (2R)-2-phosphoglycerate contacts are provided by Lys-339, Arg-368, Ser-369, and Lys-390. The active-site Proton acceptor is the Lys-339.

The protein belongs to the enolase family. Component of the RNA degradosome, a multiprotein complex involved in RNA processing and mRNA degradation. Mg(2+) is required as a cofactor.

It is found in the cytoplasm. The protein localises to the secreted. Its subcellular location is the cell surface. It carries out the reaction (2R)-2-phosphoglycerate = phosphoenolpyruvate + H2O. It participates in carbohydrate degradation; glycolysis; pyruvate from D-glyceraldehyde 3-phosphate: step 4/5. Catalyzes the reversible conversion of 2-phosphoglycerate (2-PG) into phosphoenolpyruvate (PEP). It is essential for the degradation of carbohydrates via glycolysis. The protein is Enolase of Xanthomonas oryzae pv. oryzae (strain MAFF 311018).